The sequence spans 325 residues: 4-hydroxy-3-methylbut-2-enyl diphosphate reductase (325 aa).

Cys-25 contributes to the [4Fe-4S] cluster binding site. 2 residues coordinate (2E)-4-hydroxy-3-methylbut-2-enyl diphosphate: His-54 and His-87. 2 residues coordinate dimethylallyl diphosphate: His-54 and His-87. His-54 and His-87 together coordinate isopentenyl diphosphate. Position 109 (Cys-109) interacts with [4Fe-4S] cluster. A (2E)-4-hydroxy-3-methylbut-2-enyl diphosphate-binding site is contributed by His-137. His-137 is a binding site for dimethylallyl diphosphate. Residue His-137 coordinates isopentenyl diphosphate. Glu-139 acts as the Proton donor in catalysis. (2E)-4-hydroxy-3-methylbut-2-enyl diphosphate is bound at residue Thr-179. [4Fe-4S] cluster is bound at residue Cys-209. Ser-237, Ser-238, Asn-239, and Ser-282 together coordinate (2E)-4-hydroxy-3-methylbut-2-enyl diphosphate. Residues Ser-237, Ser-238, Asn-239, and Ser-282 each coordinate dimethylallyl diphosphate. 4 residues coordinate isopentenyl diphosphate: Ser-237, Ser-238, Asn-239, and Ser-282.

Belongs to the IspH family. Requires [4Fe-4S] cluster as cofactor.

The enzyme catalyses isopentenyl diphosphate + 2 oxidized [2Fe-2S]-[ferredoxin] + H2O = (2E)-4-hydroxy-3-methylbut-2-enyl diphosphate + 2 reduced [2Fe-2S]-[ferredoxin] + 2 H(+). The catalysed reaction is dimethylallyl diphosphate + 2 oxidized [2Fe-2S]-[ferredoxin] + H2O = (2E)-4-hydroxy-3-methylbut-2-enyl diphosphate + 2 reduced [2Fe-2S]-[ferredoxin] + 2 H(+). It functions in the pathway isoprenoid biosynthesis; dimethylallyl diphosphate biosynthesis; dimethylallyl diphosphate from (2E)-4-hydroxy-3-methylbutenyl diphosphate: step 1/1. Its pathway is isoprenoid biosynthesis; isopentenyl diphosphate biosynthesis via DXP pathway; isopentenyl diphosphate from 1-deoxy-D-xylulose 5-phosphate: step 6/6. Functionally, catalyzes the conversion of 1-hydroxy-2-methyl-2-(E)-butenyl 4-diphosphate (HMBPP) into a mixture of isopentenyl diphosphate (IPP) and dimethylallyl diphosphate (DMAPP). Acts in the terminal step of the DOXP/MEP pathway for isoprenoid precursor biosynthesis. The chain is 4-hydroxy-3-methylbut-2-enyl diphosphate reductase from Corynebacterium glutamicum (strain ATCC 13032 / DSM 20300 / JCM 1318 / BCRC 11384 / CCUG 27702 / LMG 3730 / NBRC 12168 / NCIMB 10025 / NRRL B-2784 / 534).